The sequence spans 361 residues: Histidinol-phosphate aminotransferase (361 aa).

The residue at position 219 (K219) is an N6-(pyridoxal phosphate)lysine.

It belongs to the class-II pyridoxal-phosphate-dependent aminotransferase family. Histidinol-phosphate aminotransferase subfamily. As to quaternary structure, homodimer. It depends on pyridoxal 5'-phosphate as a cofactor.

It carries out the reaction L-histidinol phosphate + 2-oxoglutarate = 3-(imidazol-4-yl)-2-oxopropyl phosphate + L-glutamate. It functions in the pathway amino-acid biosynthesis; L-histidine biosynthesis; L-histidine from 5-phospho-alpha-D-ribose 1-diphosphate: step 7/9. In Cereibacter sphaeroides (strain ATCC 17023 / DSM 158 / JCM 6121 / CCUG 31486 / LMG 2827 / NBRC 12203 / NCIMB 8253 / ATH 2.4.1.) (Rhodobacter sphaeroides), this protein is Histidinol-phosphate aminotransferase.